Consider the following 243-residue polypeptide: Carboxy-S-adenosyl-L-methionine synthase (243 aa).

Residues Tyr40, 65–67 (GCS), 90–91 (DN), 118–119 (DI), Asn133, and Arg200 contribute to the S-adenosyl-L-methionine site.

This sequence belongs to the class I-like SAM-binding methyltransferase superfamily. Cx-SAM synthase family. In terms of assembly, homodimer.

It carries out the reaction prephenate + S-adenosyl-L-methionine = carboxy-S-adenosyl-L-methionine + 3-phenylpyruvate + H2O. Catalyzes the conversion of S-adenosyl-L-methionine (SAM) to carboxy-S-adenosyl-L-methionine (Cx-SAM). The chain is Carboxy-S-adenosyl-L-methionine synthase from Shewanella baltica (strain OS223).